The following is a 336-amino-acid chain: NmrA-like family domain-containing oxidoreductase FrzB (336 aa).

K135 is an NADP(+) binding site.

Belongs to the NmrA-type oxidoreductase family.

It catalyses the reaction 4-{[(2S,5S)-5-[(4-hydroxyphenyl)methyl]-2,5-dihydropyrazin-2-yl]methyl}phenol + 2 NADPH + 2 H(+) = (S,S)-2,5-di-(p-hydroxybenzyl)piperazine + 2 NADP(+). It functions in the pathway secondary metabolite biosynthesis. Its function is as follows. NmrA-like family domain-containing oxidoreductase; part of the gene cluster that mediates the biosynthesis of the alkaloid (-)-FR901483, a potent immunosuppressant that shows efficacy in animal models and a probable inhibitor of purine nucleotide biosynthesis by targeting phosphoribosylpyrophosphate amidotransferase (PPAT). Within the pathway, FrzB catalyzes the reduction of 4-{[(2S,5S)-5-[(4-hydroxyphenyl)methyl]-2,5-dihydropyrazin-2-yl]methyl}phenol to produce the (S,S)-dityrosyl-piperazine intermediate. The biosynthesis of (-)-FR901483 starts with the condensation of two L-tyrosines to yield (S,S)-dityrosyl-piperazine. This process occurs in 3 steps with the non-canonical nonribosomal peptide synthetase FrzA catalyzing the reduction of L-tyrosine into L-tyrosinal, the spontaneous condensation of 2 L-tyrosinal units, and the subsequent reduction by the NmrA-like family domain-containing oxidoreductase FrzB. The cytochrome P450 monooxygenase FrzC then performs coupling between N10 and C1' to morph the piperazine into a 1,4-diazabicyclo[3.2.1]octane spiro-fused to a 2,5-cyclohexadienone. The dienone portion is further reduced to cyclohexanone by the flavin-dependent reductase FrzD. The methyltranserases (MTs) FrzE and FrzF are then involved in the methylation at the C10' amine and the C4 phenolic oxygen, respectively. The order of the two MTs appear to be interchangeable. Cleavage of the C9-N10' bond by the dioxygenase FrzG then leads to formation of a conjugated iminium. In addition to the oxidation of C9, an additional dehydrogenation between C7 and C8 can occur to give a likely shunt product. The next biosynthetic step is the intramolecular aldol condensation catalyzed by the newly identified aldolase FrzH to yield an aza-tricyclic product with the formation of a C9-C3' bond. The short-chain dehydrogenase/reductase FrzI then produces dephospho-(-)-FR901483 that is phosphorylated at C4'-OH into (-)-FR901483 by the phosphotransferase FrzJ. The chain is NmrA-like family domain-containing oxidoreductase FrzB from Cladobotryum sp.